The primary structure comprises 515 residues: 2-isopropylmalate synthase (515 aa).

Residues 5-267 enclose the Pyruvate carboxyltransferase domain; it reads VIIFDTTLRD…STGIKHEEIH (263 aa). Residues D14, H202, H204, and N238 each contribute to the Mn(2+) site. The interval 392 to 515 is regulatory domain; the sequence is KLNYLSVQSG…EMKQKKIATV (124 aa).

It belongs to the alpha-IPM synthase/homocitrate synthase family. LeuA type 1 subfamily. In terms of assembly, homodimer. Mn(2+) is required as a cofactor.

It localises to the cytoplasm. It catalyses the reaction 3-methyl-2-oxobutanoate + acetyl-CoA + H2O = (2S)-2-isopropylmalate + CoA + H(+). Its pathway is amino-acid biosynthesis; L-leucine biosynthesis; L-leucine from 3-methyl-2-oxobutanoate: step 1/4. Its function is as follows. Catalyzes the condensation of the acetyl group of acetyl-CoA with 3-methyl-2-oxobutanoate (2-ketoisovalerate) to form 3-carboxy-3-hydroxy-4-methylpentanoate (2-isopropylmalate). This Vibrio parahaemolyticus serotype O3:K6 (strain RIMD 2210633) protein is 2-isopropylmalate synthase.